Here is a 138-residue protein sequence, read N- to C-terminus: Large ribosomal subunit protein uL11c (138 aa).

It belongs to the universal ribosomal protein uL11 family. As to quaternary structure, part of the ribosomal stalk of the 50S ribosomal subunit. Interacts with L10 and the large rRNA to form the base of the stalk. L10 forms an elongated spine to which L12 dimers bind in a sequential fashion forming a multimeric L10(L12)X complex.

It localises to the plastid. Its subcellular location is the chloroplast. Forms part of the ribosomal stalk which helps the ribosome interact with GTP-bound translation factors. This Cyanidioschyzon merolae (strain NIES-3377 / 10D) (Unicellular red alga) protein is Large ribosomal subunit protein uL11c.